Consider the following 205-residue polypeptide: Histone H1, early embryonic (205 aa).

Disordered regions lie at residues 1–21 (MAEK…HPPA) and 94–205 (AKAQ…AKSK). The H15 domain occupies 17-91 (AHPPAAEMVA…GASGSFKVNV (75 aa)). Residues 98 to 124 (ASEKAKKEKEKAKLLAQREKAKEKGCS) show a composition bias toward basic and acidic residues. Composition is skewed to basic residues over residues 135–150 (PKKV…KPVK) and 157–205 (EKKK…AKSK).

The protein belongs to the histone H1/H5 family.

The protein resides in the nucleus. It is found in the chromosome. Functionally, histones H1 are necessary for the condensation of nucleosome chains into higher-order structures. In Strongylocentrotus purpuratus (Purple sea urchin), this protein is Histone H1, early embryonic.